Consider the following 86-residue polypeptide: uncharacterized protein (86 aa).

This is an uncharacterized protein from Archaeoglobus fulgidus (strain ATCC 49558 / DSM 4304 / JCM 9628 / NBRC 100126 / VC-16).